We begin with the raw amino-acid sequence, 378 residues long: Erythronate-4-phosphate dehydrogenase (378 aa).

Substrate-binding residues include Ser45 and Thr66. Asp146 is a binding site for NAD(+). Arg207 is an active-site residue. Residue Asp231 participates in NAD(+) binding. Glu236 is an active-site residue. His253 serves as the catalytic Proton donor. NAD(+) is bound at residue Gly256.

This sequence belongs to the D-isomer specific 2-hydroxyacid dehydrogenase family. PdxB subfamily. Homodimer.

The protein resides in the cytoplasm. The catalysed reaction is 4-phospho-D-erythronate + NAD(+) = (R)-3-hydroxy-2-oxo-4-phosphooxybutanoate + NADH + H(+). It participates in cofactor biosynthesis; pyridoxine 5'-phosphate biosynthesis; pyridoxine 5'-phosphate from D-erythrose 4-phosphate: step 2/5. Its function is as follows. Catalyzes the oxidation of erythronate-4-phosphate to 3-hydroxy-2-oxo-4-phosphonooxybutanoate. In Wigglesworthia glossinidia brevipalpis, this protein is Erythronate-4-phosphate dehydrogenase.